The following is an 828-amino-acid chain: DNA topoisomerase 3 (828 aa).

One can recognise a Toprim domain in the interval 4–149; sequence RILNVAEKPS…KFEFYRAHFS (146 aa). In terms of domain architecture, Topo IA-type catalytic spans 167–617; sequence NEKDSIAVDT…STIEKYKQLY (451 aa). Residue Tyr361 is the O-(5'-phospho-DNA)-tyrosine intermediate of the active site. The segment at 763 to 828 is disordered; the sequence is QQQQQQQQQQ…SDRNNNNFIF (66 aa).

It belongs to the type IA topoisomerase family.

The enzyme catalyses ATP-independent breakage of single-stranded DNA, followed by passage and rejoining.. In terms of biological role, releases the supercoiling and torsional tension of DNA introduced during the DNA replication and transcription by transiently cleaving and rejoining one strand of the DNA duplex. Introduces a single-strand break via transesterification at a target site in duplex DNA. The scissile phosphodiester is attacked by the catalytic tyrosine of the enzyme, resulting in the formation of a DNA-(5'-phosphotyrosyl)-enzyme intermediate and the expulsion of a 3'-OH DNA strand. The free DNA strand than undergoes passage around the unbroken strand thus removing DNA supercoils. Finally, in the religation step, the DNA 3'-OH attacks the covalent intermediate to expel the active-site tyrosine and restore the DNA phosphodiester backbone. This is DNA topoisomerase 3 (top3) from Dictyostelium discoideum (Social amoeba).